The chain runs to 260 residues: Carbonic anhydrase 2 (260 aa).

N-acetylserine is present on S2. S2 bears the Phosphoserine mark. Residues 3-259 enclose the Alpha-carbonic anhydrase domain; the sequence is HHWGYSKSNG…LKNRKIKASF (257 aa). The disordered stretch occupies residues 16-39; that stretch reads WHKEFPIANGDRQSPVDIDTGTAQ. The active-site Proton donor/acceptor is the H64. S87 is subject to Phosphoserine. Residues H94, H96, and H119 each coordinate Zn(2+). Phosphoserine is present on S165. 198–199 contributes to the substrate binding site; it reads TT. S232 is subject to Phosphoserine.

This sequence belongs to the alpha-carbonic anhydrase family. In terms of assembly, interacts with SLC4A4 and SLC26A6. Interaction with SLC4A7 regulates SLC4A7 transporter activity. Requires Zn(2+) as cofactor.

The protein localises to the cytoplasm. It localises to the cell membrane. The catalysed reaction is hydrogencarbonate + H(+) = CO2 + H2O. The enzyme catalyses urea = cyanamide + H2O. With respect to regulation, inhibited by acetazolamide. In terms of biological role, catalyzes the reversible hydration of carbon dioxide. Can also hydrate cyanamide to urea. Involved in the regulation of fluid secretion into the anterior chamber of the eye. Essential for bone resorption and osteoclast differentiation. Contributes to intracellular pH regulation in the duodenal upper villous epithelium during proton-coupled peptide absorption. Stimulates the chloride-bicarbonate exchange activity of SLC26A6. The sequence is that of Carbonic anhydrase 2 (Ca2) from Rattus norvegicus (Rat).